Reading from the N-terminus, the 144-residue chain is Gas vesicle protein I1 (144 aa).

A disordered region spans residues 1–144 (MSDKQQQKHK…SPTEDEVNDE (144 aa)). Basic residues-rich tracts occupy residues 7 to 17 (QKHKQKARQAR) and 26 to 46 (KARR…TRNR). The span at 75–94 (MPPQKSNAENAVRNSHSTVP) shows a compositional bias: polar residues. The segment covering 122 to 136 (SEASAPSDESASGSP) has biased composition (low complexity).

It belongs to the gas vesicle GvpI family. In terms of assembly, gvpF to GvpM interact with each other in vitro, and may form multi-subunit complex(es). Interacts with GvpC1 and GvpO.

The protein resides in the gas vesicle. Functionally, proteins GvpF to GvpM might be involved in nucleating gas vesicle formation. A minor component of the gas vesicle. Gas vesicles are hollow, gas filled proteinaceous nanostructures found in several microbial planktonic microorganisms. They allow positioning of halobacteria at the optimal depth for growth in the poorly aerated, shallow brine pools of their habitat. Its function is as follows. Expression of a 9.5 kb p-vac DNA fragment containing 2 divergently transcribed regions (gvpD-gvpE-gvpF-gvpG-gvpH-gvpI-gvpJ-gvpK-gvpL-gvpM and gvpA-gvpC-gvpN-gvpO) allows H.volcanii to produce gas vesicles. A similar region restores gas vesicle production in H.halobium without the p-vac locus, but it still has the c-vac locus. This Halobacterium salinarum (strain ATCC 700922 / JCM 11081 / NRC-1) (Halobacterium halobium) protein is Gas vesicle protein I1 (gvpI11).